A 69-amino-acid chain; its full sequence is Cytochrome b-c1 complex subunit 6 (69 aa).

Disulfide bonds link C17–C59 and C31–C45.

Belongs to the UQCRH/QCR6 family. As to quaternary structure, component of the ubiquinol-cytochrome c oxidoreductase (cytochrome b-c1 complex, complex III, CIII), a multisubunit enzyme composed of 3 respiratory subunits cytochrome b, cytochrome c1 and Rieske protein, 2 core protein subunits, and additional low-molecular weight protein subunits. The complex exists as an obligatory dimer and forms supercomplexes (SCs) in the inner mitochondrial membrane with cytochrome c oxidase (complex IV, CIV).

Its subcellular location is the mitochondrion inner membrane. In terms of biological role, component of the ubiquinol-cytochrome c oxidoreductase, a multisubunit transmembrane complex that is part of the mitochondrial electron transport chain which drives oxidative phosphorylation. The respiratory chain contains 3 multisubunit complexes succinate dehydrogenase (complex II, CII), ubiquinol-cytochrome c oxidoreductase (cytochrome b-c1 complex, complex III, CIII) and cytochrome c oxidase (complex IV, CIV), that cooperate to transfer electrons derived from NADH and succinate to molecular oxygen, creating an electrochemical gradient over the inner membrane that drives transmembrane transport and the ATP synthase. The cytochrome b-c1 complex catalyzes electron transfer from ubiquinol to cytochrome c, linking this redox reaction to translocation of protons across the mitochondrial inner membrane, with protons being carried across the membrane as hydrogens on the quinol. In the process called Q cycle, 2 protons are consumed from the matrix, 4 protons are released into the intermembrane space and 2 electrons are passed to cytochrome c. This Solanum tuberosum (Potato) protein is Cytochrome b-c1 complex subunit 6.